We begin with the raw amino-acid sequence, 137 residues long: NADH dehydrogenase [ubiquinone] 1 beta subcomplex subunit 7 (137 aa).

Residue G2 is the site of N-myristoyl glycine attachment. The region spanning 56–98 (RDYCAHHLIRLLKCKRDSFPNFLACKQERHDWDYCEHRDYVMR) is the CHCH domain. The short motif at 59-69 (CAHHLIRLLKC) is the Cx9C motif 1 element. Intrachain disulfides connect C59/C90 and C69/C80. At S73 the chain carries Phosphoserine. The Cx9C motif 2 signature appears at 80–90 (CKQERHDWDYC). A disordered region spans residues 113 to 137 (KRREKKAAELAKGQGPGEVDPKVAL).

This sequence belongs to the complex I NDUFB7 subunit family. As to quaternary structure, complex I is composed of 45 different subunits.

It is found in the mitochondrion inner membrane. The protein resides in the mitochondrion intermembrane space. In terms of biological role, accessory subunit of the mitochondrial membrane respiratory chain NADH dehydrogenase (Complex I), that is believed not to be involved in catalysis. Complex I functions in the transfer of electrons from NADH to the respiratory chain. The immediate electron acceptor for the enzyme is believed to be ubiquinone. This is NADH dehydrogenase [ubiquinone] 1 beta subcomplex subunit 7 (NDUFB7) from Homo sapiens (Human).